A 354-amino-acid polypeptide reads, in one-letter code: MELDEESFLDELMSLRRDGSAPWQAPPYPGGGGGGGGGGMMMSDLLFYGGDGGSAEARGGMDASPFQELASMAAPPPQHPHEEFNFDCLSEVCNPYRSCGAQLVPSEAASQTQTQLTPLRDAMVAEEETSGDKALLHGGGGSSSPTFMFGGGAGESSEMMAGIRGVGGGVHPRSKLHGTPSKNLMAERRRRKRLNDRLSMLRSIVPKISKMDRTSILGDTIDYVKELTERIKTLEEEIGVTPEELDLLNTMKDSSSGNNNEMLVRNSTKFDVENRGSGNTRIEICCPANPGVLLSTVSALEVLGLEIEQCVVSCFSDFGMQASCLQEDGKRQVVSTDEIKQTLFRSAGYGGRCL.

The segment at 124 to 143 is disordered; that stretch reads VAEEETSGDKALLHGGGGSS. The interval 178-191 is basic motif; that stretch reads GTPSKNLMAERRRR. One can recognise a bHLH domain in the interval 178–227; the sequence is GTPSKNLMAERRRRKRLNDRLSMLRSIVPKISKMDRTSILGDTIDYVKEL. Residues 192–227 form a helix-loop-helix motif region; it reads KRLNDRLSMLRSIVPKISKMDRTSILGDTIDYVKEL.

The protein belongs to the bHLH protein family. As to quaternary structure, interacts with LAX1. In terms of processing, phosphorylated by MAPK3 and MAPK6.

Its subcellular location is the nucleus. The protein localises to the cytoplasm. Transcription factor involved in defense responses that functions downstream of RAC1 and upstream of PAL1 and WRKY19 genes. This chain is Transcription factor BHLH3, found in Oryza sativa subsp. japonica (Rice).